The following is a 216-amino-acid chain: Uracil phosphoribosyltransferase (216 aa).

Residues Arg-85, Arg-110, and 135–143 (DPMVATGYS) each bind 5-phospho-alpha-D-ribose 1-diphosphate. Residues Ile-200 and 205-207 (GDA) each bind uracil. Residue Asp-206 coordinates 5-phospho-alpha-D-ribose 1-diphosphate.

This sequence belongs to the UPRTase family. Mg(2+) is required as a cofactor.

The enzyme catalyses UMP + diphosphate = 5-phospho-alpha-D-ribose 1-diphosphate + uracil. It participates in pyrimidine metabolism; UMP biosynthesis via salvage pathway; UMP from uracil: step 1/1. Its activity is regulated as follows. Allosterically activated by GTP. Functionally, catalyzes the conversion of uracil and 5-phospho-alpha-D-ribose 1-diphosphate (PRPP) to UMP and diphosphate. This chain is Uracil phosphoribosyltransferase, found in Burkholderia vietnamiensis (strain G4 / LMG 22486) (Burkholderia cepacia (strain R1808)).